A 375-amino-acid polypeptide reads, in one-letter code: Putative fimbrium tip subunit Fim1C (375 aa).

Positions 1-16 are cleaved as a signal peptide; sequence MKLLANIFLSGLAILA. Residue cysteine 17 is the site of N-palmitoyl cysteine attachment. Cysteine 17 carries the S-diacylglycerol cysteine lipid modification. The propeptide occupies 17 to 47; it reads CVSCSKDEDPVLPLEGAKLSVAVKASGTATK.

It belongs to the bacteroidetes fimbrillin superfamily. FimA/Mfa1 family. May be part of the fimbrial tip.

It localises to the fimbrium. It is found in the cell outer membrane. Probably a component of the fimbrium tip. Fimbriae are filamentous appendages on the cell surface that mediate cell adhesion and biofilm formation. This is Putative fimbrium tip subunit Fim1C from Parabacteroides distasonis (strain ATCC 8503 / DSM 20701 / CIP 104284 / JCM 5825 / NCTC 11152).